A 250-amino-acid chain; its full sequence is uncharacterized protein (250 aa).

In terms of domain architecture, ABC transporter spans 7-244 (LKVEDLHVYR…YKKECGKCYK (238 aa)). An ATP-binding site is contributed by 39 to 46 (GPNGAGKS).

The protein belongs to the ABC transporter superfamily.

This is an uncharacterized protein from Methanocaldococcus jannaschii (strain ATCC 43067 / DSM 2661 / JAL-1 / JCM 10045 / NBRC 100440) (Methanococcus jannaschii).